The primary structure comprises 331 residues: Hydroxyacylglutathione hydrolase 1, mitochondrial (331 aa).

The transit peptide at 1–76 (MPVISKASST…HFCSISNMPS (76 aa)) directs the protein to the mitochondrion. His-131 and His-133 together coordinate Zn(2+). 2 residues coordinate Fe cation: Asp-135 and His-136. Positions 189 and 208 each coordinate Zn(2+). Asp-208 provides a ligand contact to Fe cation. 246–248 (REN) provides a ligand contact to substrate.

It belongs to the metallo-beta-lactamase superfamily. Glyoxalase II family. Fe(2+) is required as a cofactor. Fe(3+) serves as cofactor. Requires Zn(2+) as cofactor. Mainly expressed in roots, flowers and flower buds. Also detected in leaves.

Its subcellular location is the mitochondrion. It carries out the reaction an S-(2-hydroxyacyl)glutathione + H2O = a 2-hydroxy carboxylate + glutathione + H(+). It participates in secondary metabolite metabolism; methylglyoxal degradation; (R)-lactate from methylglyoxal: step 2/2. In terms of biological role, thiolesterase that catalyzes the hydrolysis of S-D-lactoyl-glutathione to form glutathione and D-lactic acid. This chain is Hydroxyacylglutathione hydrolase 1, mitochondrial (GLX2-1), found in Arabidopsis thaliana (Mouse-ear cress).